Here is a 140-residue protein sequence, read N- to C-terminus: Large ribosomal subunit protein uL13 (140 aa).

It belongs to the universal ribosomal protein uL13 family. Part of the 50S ribosomal subunit.

In terms of biological role, this protein is one of the early assembly proteins of the 50S ribosomal subunit, although it is not seen to bind rRNA by itself. It is important during the early stages of 50S assembly. The sequence is that of Large ribosomal subunit protein uL13 from Methanosarcina mazei (strain ATCC BAA-159 / DSM 3647 / Goe1 / Go1 / JCM 11833 / OCM 88) (Methanosarcina frisia).